The chain runs to 467 residues: 3-isopropylmalate dehydratase large subunit (467 aa).

Cys348, Cys409, and Cys412 together coordinate [4Fe-4S] cluster. A disordered region spans residues Asn423–Pro449.

It belongs to the aconitase/IPM isomerase family. LeuC type 1 subfamily. Heterodimer of LeuC and LeuD. [4Fe-4S] cluster is required as a cofactor.

The enzyme catalyses (2R,3S)-3-isopropylmalate = (2S)-2-isopropylmalate. It participates in amino-acid biosynthesis; L-leucine biosynthesis; L-leucine from 3-methyl-2-oxobutanoate: step 2/4. In terms of biological role, catalyzes the isomerization between 2-isopropylmalate and 3-isopropylmalate, via the formation of 2-isopropylmaleate. This Bifidobacterium longum subsp. infantis (strain ATCC 15697 / DSM 20088 / JCM 1222 / NCTC 11817 / S12) protein is 3-isopropylmalate dehydratase large subunit.